The chain runs to 304 residues: tRNA dimethylallyltransferase (304 aa).

2 to 9 (GPTASGKT) is an ATP binding site. 4-9 (TASGKT) provides a ligand contact to substrate. Interaction with substrate tRNA regions lie at residues 27-30 (DSAL), 151-155 (QRINR), 232-237 (RCVGYR), and 265-272 (KRQITWLR).

It belongs to the IPP transferase family. As to quaternary structure, monomer. Requires Mg(2+) as cofactor.

The enzyme catalyses adenosine(37) in tRNA + dimethylallyl diphosphate = N(6)-dimethylallyladenosine(37) in tRNA + diphosphate. Its function is as follows. Catalyzes the transfer of a dimethylallyl group onto the adenine at position 37 in tRNAs that read codons beginning with uridine, leading to the formation of N6-(dimethylallyl)adenosine (i(6)A). This Actinobacillus pleuropneumoniae serotype 5b (strain L20) protein is tRNA dimethylallyltransferase.